The sequence spans 1487 residues: Chromosome partition protein MukB (1487 aa).

34–41 is a binding site for ATP; it reads GGNGAGKS. Coiled-coil stretches lie at residues 297 to 426, 460 to 666, 781 to 806, 836 to 1111, and 1210 to 1266; these read SSRE…LEKA, ALKH…RLAS, RAAR…AKAA, EQAL…RTFV, and VEAI…LSNI. The interval 667-784 is flexible hinge; the sequence is PGGSNDPRLK…VIPLFGRAAR (118 aa).

This sequence belongs to the SMC family. MukB subfamily. Homodimerization via its hinge domain. Binds to DNA via its C-terminal region. Interacts, and probably forms a ternary complex, with MukE and MukF via its C-terminal region. The complex formation is stimulated by calcium or magnesium. Interacts with tubulin-related protein FtsZ.

The protein resides in the cytoplasm. It localises to the nucleoid. In terms of biological role, plays a central role in chromosome condensation, segregation and cell cycle progression. Functions as a homodimer, which is essential for chromosome partition. Involved in negative DNA supercoiling in vivo, and by this means organize and compact chromosomes. May achieve or facilitate chromosome segregation by condensation DNA from both sides of a centrally located replisome during cell division. The chain is Chromosome partition protein MukB from Vibrio vulnificus (strain CMCP6).